We begin with the raw amino-acid sequence, 688 residues long: Elongation factor G (688 aa).

A tr-type G domain is found at 8 to 282; sequence ERTRNIGIMA…AVLDYLPAPT (275 aa). GTP-binding positions include 17–24, 81–85, and 135–138; these read AHIDAGKT, DTPGH, and NKMD.

This sequence belongs to the TRAFAC class translation factor GTPase superfamily. Classic translation factor GTPase family. EF-G/EF-2 subfamily.

Its subcellular location is the cytoplasm. Its function is as follows. Catalyzes the GTP-dependent ribosomal translocation step during translation elongation. During this step, the ribosome changes from the pre-translocational (PRE) to the post-translocational (POST) state as the newly formed A-site-bound peptidyl-tRNA and P-site-bound deacylated tRNA move to the P and E sites, respectively. Catalyzes the coordinated movement of the two tRNA molecules, the mRNA and conformational changes in the ribosome. The protein is Elongation factor G of Clostridioides difficile (strain 630) (Peptoclostridium difficile).